The sequence spans 109 residues: Tektin-3 (109 aa).

The protein belongs to the tektin family. Microtubule inner protein component of sperm flagellar doublet microtubules. Interacts with TEKT1, TEKT2, TEKT4 and TEKT5. Interacts with CCDC38. In terms of processing, N- and O-glycosylated. May be proteolytically processed during the epididymal transit of spermatozoa. Post-translationally, ubiquitinated, leading to its degradation. Deubiquitinated by USP16, promoting its stability.

The protein resides in the cytoplasm. Its subcellular location is the cytoskeleton. It is found in the cilium axoneme. The protein localises to the flagellum axoneme. It localises to the cytoplasmic vesicle. The protein resides in the secretory vesicle. Its subcellular location is the acrosome outer membrane. Functionally, microtubule inner protein (MIP) part of the dynein-decorated doublet microtubules (DMTs) in cilia and flagellar axoneme. Forms filamentous polymers in the walls of ciliary and flagellar microtubules. Required for normal sperm mobility. The polypeptide is Tektin-3 (Mesocricetus auratus (Golden hamster)).